Reading from the N-terminus, the 534-residue chain is Bifunctional purine biosynthesis protein PurH (534 aa).

The 146-residue stretch at 6–151 folds into the MGS-like domain; the sequence is TRLPVRRALI…KNHKDVAIVV (146 aa).

The protein belongs to the PurH family.

The enzyme catalyses (6R)-10-formyltetrahydrofolate + 5-amino-1-(5-phospho-beta-D-ribosyl)imidazole-4-carboxamide = 5-formamido-1-(5-phospho-D-ribosyl)imidazole-4-carboxamide + (6S)-5,6,7,8-tetrahydrofolate. It carries out the reaction IMP + H2O = 5-formamido-1-(5-phospho-D-ribosyl)imidazole-4-carboxamide. Its pathway is purine metabolism; IMP biosynthesis via de novo pathway; 5-formamido-1-(5-phospho-D-ribosyl)imidazole-4-carboxamide from 5-amino-1-(5-phospho-D-ribosyl)imidazole-4-carboxamide (10-formyl THF route): step 1/1. It functions in the pathway purine metabolism; IMP biosynthesis via de novo pathway; IMP from 5-formamido-1-(5-phospho-D-ribosyl)imidazole-4-carboxamide: step 1/1. The polypeptide is Bifunctional purine biosynthesis protein PurH (Stutzerimonas stutzeri (strain A1501) (Pseudomonas stutzeri)).